The chain runs to 227 residues: Orotidine 5'-phosphate decarboxylase (227 aa).

Substrate-binding positions include D12, K34, 61 to 70 (DLKLHDIPNT), T117, R178, Q187, G207, and R208. The active-site Proton donor is the K63.

The protein belongs to the OMP decarboxylase family. Type 1 subfamily. As to quaternary structure, homodimer.

The enzyme catalyses orotidine 5'-phosphate + H(+) = UMP + CO2. The protein operates within pyrimidine metabolism; UMP biosynthesis via de novo pathway; UMP from orotate: step 2/2. Its function is as follows. Catalyzes the decarboxylation of orotidine 5'-monophosphate (OMP) to uridine 5'-monophosphate (UMP). This is Orotidine 5'-phosphate decarboxylase from Anaeromyxobacter dehalogenans (strain 2CP-1 / ATCC BAA-258).